The chain runs to 384 residues: MAP kinase-activated protein kinase 3 (384 aa).

N-acetylmethionine is present on Met1. The segment at 1 to 33 (MDGETAGEKGSLVPQPGALGAPALGGAPAPGVR) is disordered. The span at 14–31 (PQPGALGAPALGGAPAPG) shows a compositional bias: low complexity. Positions 46–306 (QLSKQVLGLG…IMQFMNHPWI (261 aa)) constitute a Protein kinase domain. Residues 52–60 (LGLGVNGKV) and Lys75 contribute to the ATP site. Residue Asp168 is the Proton acceptor of the active site. Thr203 carries the phosphothreonine; by MAPK14 modification. At Ser253 the chain carries Phosphoserine; by MAPK14. Ser309 carries the post-translational modification Phosphoserine; by autocatalysis. The autoinhibitory helix stretch occupies residues 309-345 (SMEVPQTPLHTARVLEEDKDHWDDVKEEMTSALATMR). Position 315 is a phosphothreonine; by MAPK14 (Thr315). Positions 337-346 (MTSALATMRV) match the Nuclear export signal (NES) motif. Positions 347–371 (DYDQVKIKDLKTSNNRLLNKRRKKQ) are p38 MAPK-binding site. Short sequence motifs (bipartite nuclear localization signal) lie at residues 352–355 (KIKD) and 366–370 (KRRKK). The interval 359–384 (SNNRLLNKRRKKQGGSSSASPGCNNQ) is disordered. Residues 372–384 (GGSSSASPGCNNQ) are compositionally biased toward polar residues.

This sequence belongs to the protein kinase superfamily. CAMK Ser/Thr protein kinase family. As to quaternary structure, heterodimer with p38-alpha/MAPK14. The heterodimer with p38-alpha/MAPK14 forms a stable complex: molecules are positioned 'face to face' so that the ATP-binding sites of both kinases are at the heterodimer interface. Interacts with TCF3 and with polycomb proteins, such as PCH2 and BMI1/PCGF4. Post-translationally, phosphorylated and activated by MAPK1/ERK2 and MAPK3/ERK1. Phosphorylated and activated by MAP kinase p38-alpha/MAPK14 at Thr-203, Ser-253 and Thr-315.

The protein localises to the nucleus. It localises to the cytoplasm. The catalysed reaction is L-seryl-[protein] + ATP = O-phospho-L-seryl-[protein] + ADP + H(+). It catalyses the reaction L-threonyl-[protein] + ATP = O-phospho-L-threonyl-[protein] + ADP + H(+). Its activity is regulated as follows. Activated following phosphorylation by p38-alpha/MAPK14 following various stresses. Inhibited by ligand 5B (2'-[2-(1,3-benzodioxol-5-yl)pyrimidin-4-yl]-5',6'-dihydrospiro[piperidine-4,7'-pyrrolo[3,2-c]pyridin]- 4'(1'h)-one) and ligand P4O (2-[2-(2-fluorophenyl)pyridin-4-yl]-1,5,6,7-tetrahydro- 4h-pyrrolo[3,2-c]pyridin-4-one), 2 ATP-competitive inhibitors. Stress-activated serine/threonine-protein kinase involved in cytokines production, endocytosis, cell migration, chromatin remodeling and transcriptional regulation. Following stress, it is phosphorylated and activated by MAP kinase p38-alpha/MAPK14, leading to phosphorylation of substrates. Phosphorylates serine in the peptide sequence, Hyd-X-R-X(2)-S, where Hyd is a large hydrophobic residue. MAPKAPK2 and MAPKAPK3, share the same function and substrate specificity, but MAPKAPK3 kinase activity and level in protein expression are lower compared to MAPKAPK2. Phosphorylates HSP27/HSPB1, KRT18, KRT20, RCSD1, RPS6KA3, TAB3 and TTP/ZFP36. Mediates phosphorylation of HSP27/HSPB1 in response to stress, leading to dissociate HSP27/HSPB1 from large small heat-shock protein (sHsps) oligomers and impair their chaperone activities and ability to protect against oxidative stress effectively. Involved in inflammatory response by regulating tumor necrosis factor (TNF) and IL6 production post-transcriptionally: acts by phosphorylating AU-rich elements (AREs)-binding proteins, such as TTP/ZFP36, leading to regulate the stability and translation of TNF and IL6 mRNAs. Phosphorylation of TTP/ZFP36, a major post-transcriptional regulator of TNF, promotes its binding to 14-3-3 proteins and reduces its ARE mRNA affinity leading to inhibition of dependent degradation of ARE-containing transcript. Involved in toll-like receptor signaling pathway (TLR) in dendritic cells: required for acute TLR-induced macropinocytosis by phosphorylating and activating RPS6KA3. Also acts as a modulator of Polycomb-mediated repression. This Rattus norvegicus (Rat) protein is MAP kinase-activated protein kinase 3 (Mapkapk3).